The following is a 176-amino-acid chain: SLSHEKFFSLGSGPGRALAGREELYKELGYKDSADAAVLVLESDKVPPQEVVEKVARDTGVKAENLTFILTPTRSLAGTVQIVARVLEVALHKIHTLHFPLEHVVDGMASAPLPPPAPDFLIGMGRTNDAILFGGHAHIFVKGSDEAAAKLAKELPSSASRDYGRPFAEVFKAVNM.

The protein belongs to the MCH family.

It is found in the cytoplasm. The catalysed reaction is 5,10-methenyl-5,6,7,8-tetrahydromethanopterin + H2O = N(5)-formyl-5,6,7,8-tetrahydromethanopterin + H(+). It participates in one-carbon metabolism; formaldehyde degradation; formate from formaldehyde (H(4)MPT route): step 3/5. In terms of biological role, catalyzes the hydrolysis of methenyl-H(4)MPT(+) to 5-formyl-H(4)MPT. The protein is Methenyltetrahydromethanopterin cyclohydrolase (mch) of Methylophilus methylotrophus (Bacterium W3A1).